The following is a 506-amino-acid chain: MAEYIVAIDQGTTSTRAIIFDKSGSIVSTGQLEHEQIFPKPGWVEHNPVEIWNNTREVIGQALSKADLTRHDIAAVGITNQRETAVVWDKNTGEPVYNAIVWQDTRTQPIVDRLAAEGGVERFKPIVGLPLATYFSGTKIVWILENVEGVRERAERGDLLFGTTESWVLWNLTGGTDGGVHATDVTNASRTLFMDLETLSWRDDILDVFGVPKSMLPEIKSSSEVYGAVESSSLLREVPVAGILGDQQAATFGQAAFDPGESKNTYGTGNFLIFNTGEEIVHSKNGLLTTLGYKLGDGKPHYALEGSIAVTGSLVQWLRDNLGVISSAPEIEELAQTVEDNGGAYFVPALSGLFAPYWRADARGALVGLTRYVNKGHIARAALEATAFQTREVLDAVNADSGVDLTELKVDGGMIANNTLMQFQADILGVPVVRPVVAETTALGAAYAAGLATGFWENLDDLRKNWKEDRRWEPKMDAAERDRQLRLWKKAVTKTFDWVDDDVRNG.

An ADP-binding site is contributed by T12. ATP is bound by residues T12, T13, and S14. T12 provides a ligand contact to sn-glycerol 3-phosphate. Position 16 (R16) interacts with ADP. Sn-glycerol 3-phosphate contacts are provided by R82, E83, Y134, and D246. Residues R82, E83, Y134, D246, and Q247 each coordinate glycerol. T268 and G312 together coordinate ADP. Positions 268, 312, 316, and 413 each coordinate ATP. 2 residues coordinate ADP: G413 and N417.

Belongs to the FGGY kinase family.

The enzyme catalyses glycerol + ATP = sn-glycerol 3-phosphate + ADP + H(+). It participates in polyol metabolism; glycerol degradation via glycerol kinase pathway; sn-glycerol 3-phosphate from glycerol: step 1/1. Inhibited by fructose 1,6-bisphosphate (FBP). Key enzyme in the regulation of glycerol uptake and metabolism. Catalyzes the phosphorylation of glycerol to yield sn-glycerol 3-phosphate. In Leifsonia xyli subsp. xyli (strain CTCB07), this protein is Glycerol kinase.